The primary structure comprises 278 residues: UPF0276 protein Sama_1305 (278 aa).

It belongs to the UPF0276 family.

The polypeptide is UPF0276 protein Sama_1305 (Shewanella amazonensis (strain ATCC BAA-1098 / SB2B)).